A 373-amino-acid polypeptide reads, in one-letter code: Sterol-4-alpha-carboxylate 3-dehydrogenase, decarboxylating (373 aa).

An N-acetylmethionine modification is found at Met-1. Phosphothreonine is present on Thr-22. The active-site Proton acceptor is the Tyr-172. Lys-176 is a binding site for NAD(+). Residues 298-318 (WVAYYLALLLSLLVMVISPVI) traverse the membrane as a helical segment. The Prevents secretion from ER motif lies at 370–373 (RRVK).

Belongs to the 3-beta-HSD family. As to quaternary structure, homodimer. Brain, heart, liver, lung, kidney, skin and placenta.

The protein resides in the endoplasmic reticulum membrane. Its subcellular location is the lipid droplet. It catalyses the reaction a 3beta-hydroxysteroid-4alpha-carboxylate + NADP(+) = a 3-oxosteroid + CO2 + NADPH. The catalysed reaction is a 3beta-hydroxysteroid-4alpha-carboxylate + NAD(+) = a 3-oxosteroid + CO2 + NADH. The enzyme catalyses 4alpha-carboxyzymosterol + NADP(+) = zymosterone + CO2 + NADPH. It carries out the reaction 4alpha-carboxy-4beta-methyl-5alpha-cholest-8-en-3beta-ol + NADP(+) = 4alpha-methyl-5alpha-cholest-8-en-3-one + CO2 + NADPH. It catalyses the reaction 4alpha-carboxy-5alpha-cholest-8-ene-3beta-ol + NADP(+) = 5alpha-cholest-8-en-3-one + CO2 + NADPH. The catalysed reaction is 4beta-methylzymosterol-4alpha-carboxylate + NADP(+) = 3-dehydro-4-methylzymosterol + CO2 + NADPH. The enzyme catalyses 4beta-methylzymosterol-4alpha-carboxylate + NAD(+) = 3-dehydro-4-methylzymosterol + CO2 + NADH. It carries out the reaction 4alpha-carboxy-5alpha-cholest-8-ene-3beta-ol + NAD(+) = 5alpha-cholest-8-en-3-one + CO2 + NADH. It catalyses the reaction 4alpha-carboxy-4beta-methyl-5alpha-cholest-8-en-3beta-ol + NAD(+) = 4alpha-methyl-5alpha-cholest-8-en-3-one + CO2 + NADH. The catalysed reaction is 4alpha-carboxyzymosterol + NAD(+) = zymosterone + CO2 + NADH. It functions in the pathway steroid biosynthesis; zymosterol biosynthesis; zymosterol from lanosterol: step 4/6. Catalyzes the NAD(P)(+)-dependent oxidative decarboxylation of the C4 methyl groups of 4-alpha-carboxysterols in post-squalene cholesterol biosynthesis. Also plays a role in the regulation of the endocytic trafficking of EGFR. The chain is Sterol-4-alpha-carboxylate 3-dehydrogenase, decarboxylating (NSDHL) from Homo sapiens (Human).